The sequence spans 413 residues: Chloramphenicol resistance protein CraA (413 aa).

12 helical membrane-spanning segments follow: residues 18–38 (LMFP…NDLI), 55–75 (WAPS…WLLG), 84–104 (KKVL…ILLT), 110–130 (FLTL…VGYA), 147–167 (LMAN…AFLI), 170–190 (VSWH…WVGL), 228–248 (ALPL…IILV), 260–280 (LAQF…IKII), 289–309 (VLIG…GVVW), 312–332 (YLIP…GISF), 349–369 (TVAA…IELV), and 373–393 (YTQF…ALWF).

It belongs to the major facilitator superfamily.

The protein localises to the cell inner membrane. Functionally, efflux pump that mediates resistance to chloramphenicol. The polypeptide is Chloramphenicol resistance protein CraA (Acinetobacter baumannii (strain ATCC 19606 / DSM 30007 / JCM 6841 / CCUG 19606 / CIP 70.34 / NBRC 109757 / NCIMB 12457 / NCTC 12156 / 81)).